Here is a 120-residue protein sequence, read N- to C-terminus: NAD(P)H-quinone oxidoreductase subunit 3 (120 aa).

Helical transmembrane passes span 10-30 (FLGF…TNLI), 64-84 (MFAL…PWAV), and 89-109 (LGLL…IALA).

It belongs to the complex I subunit 3 family. NDH-1 can be composed of about 15 different subunits; different subcomplexes with different compositions have been identified which probably have different functions.

It localises to the cellular thylakoid membrane. The catalysed reaction is a plastoquinone + NADH + (n+1) H(+)(in) = a plastoquinol + NAD(+) + n H(+)(out). It catalyses the reaction a plastoquinone + NADPH + (n+1) H(+)(in) = a plastoquinol + NADP(+) + n H(+)(out). Functionally, NDH-1 shuttles electrons from an unknown electron donor, via FMN and iron-sulfur (Fe-S) centers, to quinones in the respiratory and/or the photosynthetic chain. The immediate electron acceptor for the enzyme in this species is believed to be plastoquinone. Couples the redox reaction to proton translocation, and thus conserves the redox energy in a proton gradient. Cyanobacterial NDH-1 also plays a role in inorganic carbon-concentration. The protein is NAD(P)H-quinone oxidoreductase subunit 3 of Prochlorococcus marinus (strain MIT 9301).